We begin with the raw amino-acid sequence, 974 residues long: Kinase-interacting protein 1 (974 aa).

The NAB domain occupies 10 to 90 (YSWWAASHIR…ERYDHLSKEL (81 aa)). A disordered region spans residues 151–170 (STASKQKQGKQSSKIEDAAK). Positions 173 to 423 (LSKNEAIEEI…DVVNQNSCLR (251 aa)) form a coiled coil. A disordered region spans residues 586–614 (AQPTPAEKGDEKVSAQSGNTSVYETHTQK). Polar residues predominate over residues 599–610 (SAQSGNTSVYET). Positions 641-697 (NEYTAILKNYKEVTKKLSDIEKKDRDTEFELTLQTRELKSAIAKRDEEIHNLRQKLS) form a coiled coil. The segment at 714 to 740 (LLDPSDPSSARGLKPEDLPQIKDGDDE) is disordered. Over residues 726–736 (LKPEDLPQIKD) the composition is skewed to basic and acidic residues. 2 coiled-coil regions span residues 784-807 (HQIQKFKTTVHDLQNEISKARDKE) and 882-905 (AAKFQGEVLNMKHENKKVREELEA).

Homodimer or homooligomer. Interacts with PRK1. Post-translationally, phosphorylated by PRK1. As to expression, expressed in mature pollen grains and pollen tubes, but not in style, ovary, petal, leaf, root or sepal.

Its subcellular location is the cytoplasm. Its function is as follows. Probably involved in the receptor-like kinase-mediated signal transduction pathway. The sequence is that of Kinase-interacting protein 1 from Petunia integrifolia (Violet-flowered petunia).